The sequence spans 87 residues: Putative defensin-like protein 84 (87 aa).

An N-terminal signal peptide occupies residues 1–27; that stretch reads MTTKMVSSHRLLTLMVFALLLIPMISG. Intrachain disulfides connect Cys-32–Cys-73, Cys-36–Cys-54, Cys-42–Cys-71, and Cys-46–Cys-72.

Belongs to the DEFL family.

The protein localises to the secreted. This chain is Putative defensin-like protein 84, found in Arabidopsis thaliana (Mouse-ear cress).